A 267-amino-acid chain; its full sequence is tRNA pseudouridine synthase A (267 aa).

The active-site Nucleophile is the aspartate 54. Tyrosine 114 is a substrate binding site.

The protein belongs to the tRNA pseudouridine synthase TruA family. As to quaternary structure, homodimer.

The catalysed reaction is uridine(38/39/40) in tRNA = pseudouridine(38/39/40) in tRNA. Functionally, formation of pseudouridine at positions 38, 39 and 40 in the anticodon stem and loop of transfer RNAs. In Tropheryma whipplei (strain Twist) (Whipple's bacillus), this protein is tRNA pseudouridine synthase A.